The following is a 284-amino-acid chain: Bifunctional protein FolD (284 aa).

NADP(+) contacts are provided by residues glycine 166–serine 168 and serine 191.

Belongs to the tetrahydrofolate dehydrogenase/cyclohydrolase family. Homodimer.

It carries out the reaction (6R)-5,10-methylene-5,6,7,8-tetrahydrofolate + NADP(+) = (6R)-5,10-methenyltetrahydrofolate + NADPH. The catalysed reaction is (6R)-5,10-methenyltetrahydrofolate + H2O = (6R)-10-formyltetrahydrofolate + H(+). The protein operates within one-carbon metabolism; tetrahydrofolate interconversion. Its function is as follows. Catalyzes the oxidation of 5,10-methylenetetrahydrofolate to 5,10-methenyltetrahydrofolate and then the hydrolysis of 5,10-methenyltetrahydrofolate to 10-formyltetrahydrofolate. The chain is Bifunctional protein FolD from Leptospira borgpetersenii serovar Hardjo-bovis (strain JB197).